Consider the following 986-residue polypeptide: Ephrin type-B receptor 2 (986 aa).

Positions 1–18 are cleaved as a signal peptide; it reads MAVRRLGAALLLLPLLAA. Residues 19–543 lie on the Extracellular side of the membrane; it reads VEETLMDSTT…QTSIKEKLPL (525 aa). Residues 20-202 enclose the Eph LBD domain; it reads EETLMDSTTA…FYRKCPRIIQ (183 aa). Disulfide bonds link Cys62–Cys184 and Cys97–Cys107. N-linked (GlcNAc...) asparagine glycans are attached at residues Asn265, Asn336, Asn428, and Asn482. 2 Fibronectin type-III domains span residues 324-434 and 435-530; these read IPSA…TNQA and APSA…TMTE. The helical transmembrane segment at 544-564 threads the bilayer; sequence IVGSSAAGLVFLIAVVVIAIV. Over 565–986 the chain is Cytoplasmic; sequence CNRRGFERAD…QMNQIQSVEV (422 aa). The Protein kinase domain occupies 621–884; sequence VKIEQVIGAG…QIVNTLDKMI (264 aa). Residues 627-635 and Lys653 contribute to the ATP site; that span reads IGAGEFGEV. Residue Asp746 is the Proton acceptor of the active site. Lys891 participates in a covalent cross-link: Glycyl lysine isopeptide (Lys-Gly) (interchain with G-Cter in ubiquitin). The SAM domain occupies 913-977; it reads TSFNTVDEWL…LNSIQVMRAQ (65 aa). Positions 984 to 986 match the PDZ-binding motif; the sequence is VEV.

The protein belongs to the protein kinase superfamily. Tyr protein kinase family. Ephrin receptor subfamily. As to quaternary structure, heterotetramer upon binding of the ligand. The heterotetramer is composed of an ephrin dimer and a receptor dimer. Interacts (via PDZ-binding motif) with GRIP1 and PICK1 (via PDZ domain). Interacts with ARHGEF15; mediates ARHGEF15 phosphorylation, ubiquitination and degradation by the proteasome. Interacts with AQP1; involved in endolymph production in the inner ear. Interacts with EFNA5. Interacts with SPSB1. Interacts with SPSB4. Interacts with SH2D3C. Autophosphorylated; ligand binding stimulates autophosphorylation on tyrosine residues. In terms of processing, ligand binding induces cleavage by matrix metalloproteinases (MMPs) such as MMP7/MMP9, producing an EphB2/N-terminal fragment (NTF) and a C-terminal long fragment (EphB2-LF). EphB2-LF is further cleaved by MMPs, producing EphB2/CTF1 which is further cleaved by the PS1/gamma-secretase producing EphB2/CTF2. Post-translationally, polyubiquitinated; ligand binding stimulates ubiquitination. Ubiquitinated by RNF186 at Lys-891, mainly through 'Lys-27'-linked polyubiquitin chains. Ubiquitinated by CRL2(KLHDC2) E3 ligase complex. Expressed in the epithelial dark cells of the inner ear. Expressed in the region of the proximal tubules of the kidney nephron. Expressed in myogenic progenitor cells.

It localises to the cell membrane. It is found in the cell projection. Its subcellular location is the axon. The protein resides in the dendrite. The catalysed reaction is L-tyrosyl-[protein] + ATP = O-phospho-L-tyrosyl-[protein] + ADP + H(+). Receptor tyrosine kinase which binds promiscuously transmembrane ephrin-B family ligands residing on adjacent cells, leading to contact-dependent bidirectional signaling into neighboring cells. The signaling pathway downstream of the receptor is referred to as forward signaling while the signaling pathway downstream of the ephrin ligand is referred to as reverse signaling. Functions in axon guidance during development. Involved in the guidance of commissural axons, that form a major interhemispheric connection between the 2 temporal lobes of the cerebral cortex. Also involved in guidance of contralateral inner ear efferent growth cones at the midline and of retinal ganglion cell axons to the optic disk. In addition to axon guidance, also regulates dendritic spines development and maturation and stimulates the formation of excitatory synapses. Upon activation by EFNB1, abolishes the ARHGEF15-mediated negative regulation on excitatory synapse formation. Controls other aspects of development including angiogenesis, palate development and in inner ear development through regulation of endolymph production. Forward and reverse signaling through the EFNB2/EPHB2 complex regulate movement and adhesion of cells that tubularize the urethra and septate the cloaca. May function as a tumor suppressor. May be involved in the regulation of platelet activation and blood coagulation. This Mus musculus (Mouse) protein is Ephrin type-B receptor 2.